Consider the following 28-residue polypeptide: Alkaline serine protease NJP (28 aa).

With respect to regulation, inhibited by PMSF. Not or very weakly inhibited by EDTA, EGTA, beta-mercaptoethanol, benzamidine, aprotinin, iodoacetic acid, pepstatin A and SBTI. Functionally, alkaline thrombin-like serine protease. Has fibrinolytic and fibrinogenolytic but not plasminogenolytic activity. Cleaves fibrinogen chains Aalpha, Bbeta and gamma chains in that order. Cleaves after Arg and Lys residues. The chain is Alkaline serine protease NJP from Hediste japonica (Polychaete worm).